Consider the following 149-residue polypeptide: Azurin (149 aa).

Positions 1–20 (MLAKATLAIVLSAASLPVLA) are cleaved as a signal peptide. The 129-residue stretch at 21-149 (AQCEATIESN…MMKGTLKLSN (129 aa)) folds into the Plastocyanin-like domain. C23 and C46 form a disulfide bridge. 4 residues coordinate Cu cation: H66, C132, H137, and M141.

Its subcellular location is the periplasm. Transfers electrons from cytochrome c551 to cytochrome oxidase. The sequence is that of Azurin (azu) from Achromobacter denitrificans (Alcaligenes denitrificans).